Here is a 374-residue protein sequence, read N- to C-terminus: Anthranilate O-methyltransferase 2 (374 aa).

Tyrosine 18 lines the S-adenosyl-L-homocysteine pocket. Glutamine 25 is an anthranilate binding site. S-adenosyl-L-homocysteine is bound by residues cysteine 59, asparagine 64, aspartate 98, leucine 99, serine 142, and tyrosine 143. Anthranilate is bound at residue tryptophan 164. Mg(2+)-binding residues include glutamate 261 and phenylalanine 263.

The protein belongs to the methyltransferase superfamily. Type-7 methyltransferase family. SABATH subfamily.

The catalysed reaction is anthranilate + S-adenosyl-L-methionine = O-methyl anthranilate + S-adenosyl-L-homocysteine. Methyltransferase involved in the biosynthesis of methyl anthranilate in response to stresses. Utilizes anthranilic acid as substrate. Produces exclusively the O-methyl ester. This Zea mays (Maize) protein is Anthranilate O-methyltransferase 2 (AAMT2).